We begin with the raw amino-acid sequence, 427 residues long: Steroid C26-monooxygenase (427 aa).

Cysteine 360 serves as a coordination point for heme.

Belongs to the cytochrome P450 family. Heme is required as a cofactor.

It catalyses the reaction cholest-4-en-3-one + 6 reduced [2Fe-2S]-[ferredoxin] + 3 O2 + 5 H(+) = (25S)-3-oxocholest-4-en-26-oate + 6 oxidized [2Fe-2S]-[ferredoxin] + 4 H2O. The protein operates within steroid metabolism; cholesterol degradation. Involved in the utilization of cholesterol as the sole carbon and energy source by degrading the side chain. Primarily catalyzes the sequential oxidation of the terminal methyl of cholest-4-en-3-one into (25S)-26-hydroxycholest-4-en-3-one (alcohol), (25S)-26-oxocholest-4-en-3-one (aldehyde), to finally yield the carboxylic acid (25S)-3-oxocholest-4-en-26-oate. Also able to sequentially oxidize cholesterol itself, not only cholest-4-en-3-one. The protein is Steroid C26-monooxygenase of Mycolicibacterium smegmatis (strain ATCC 700084 / mc(2)155) (Mycobacterium smegmatis).